Consider the following 143-residue polypeptide: Ribosome maturation factor RimP (143 aa).

Belongs to the RimP family.

It localises to the cytoplasm. Its function is as follows. Required for maturation of 30S ribosomal subunits. This chain is Ribosome maturation factor RimP, found in Neisseria meningitidis serogroup C (strain 053442).